We begin with the raw amino-acid sequence, 643 residues long: Threonine--tRNA ligase (643 aa).

The region spanning 3–64 (DMINITFPDG…QEDGAVEIIT (62 aa)) is the TGS domain. The interval 245 to 542 (DHRKLGKELK…LIEEHKGALP (298 aa)) is catalytic. Zn(2+)-binding residues include C338, H389, and H519.

The protein belongs to the class-II aminoacyl-tRNA synthetase family. In terms of assembly, homodimer. Zn(2+) serves as cofactor.

It is found in the cytoplasm. The catalysed reaction is tRNA(Thr) + L-threonine + ATP = L-threonyl-tRNA(Thr) + AMP + diphosphate + H(+). Its function is as follows. Catalyzes the attachment of threonine to tRNA(Thr) in a two-step reaction: L-threonine is first activated by ATP to form Thr-AMP and then transferred to the acceptor end of tRNA(Thr). Also edits incorrectly charged L-seryl-tRNA(Thr). The polypeptide is Threonine--tRNA ligase (Bacillus velezensis (strain DSM 23117 / BGSC 10A6 / LMG 26770 / FZB42) (Bacillus amyloliquefaciens subsp. plantarum)).